The primary structure comprises 236 residues: LexA repressor (236 aa).

A DNA-binding region (H-T-H motif) is located at residues 26–46 (FDEMKEALDLRSKSGIHRLIT). Active-site for autocatalytic cleavage activity residues include Ser157 and Lys195.

The protein belongs to the peptidase S24 family. As to quaternary structure, homodimer.

It catalyses the reaction Hydrolysis of Ala-|-Gly bond in repressor LexA.. Represses a number of genes involved in the response to DNA damage (SOS response), including recA and lexA. In the presence of single-stranded DNA, RecA interacts with LexA causing an autocatalytic cleavage which disrupts the DNA-binding part of LexA, leading to derepression of the SOS regulon and eventually DNA repair. This Azorhizobium caulinodans (strain ATCC 43989 / DSM 5975 / JCM 20966 / LMG 6465 / NBRC 14845 / NCIMB 13405 / ORS 571) protein is LexA repressor.